The chain runs to 839 residues: Mitochondrial 15S rRNA processing factor CCM1 (839 aa).

The transit peptide at 1–59 (MLSLKSRGSWNVLRWIQVPRRTAVIPAKPSPMRRKRRRIKNVSSKDLDLRGIDPQDSRA) directs the protein to the mitochondrion. PPR repeat units lie at residues 313–347 (NREN…SSSH) and 350–384 (DVTT…QLQP).

Belongs to the CCM1 family. Binds to mitochondrial small subunit 15S rRNA.

The protein localises to the mitochondrion. Functionally, regulates mitochondrial small subunit maturation by controlling 15S rRNA 5'-end processing. Localizes to the 5' precursor of the 15S rRNA in a position that is subsequently occupied by mS47 in the mature yeast mtSSU. Uses structure and sequence-specific RNA recognition, binding to a single-stranded region of the precursor and specifically recognizing bases -6 to -1. The exchange of Ccm1 for mS47 is coupled to the irreversible removal of precursor rRNA that is accompanied by conformational changes of the mitoribosomal proteins uS5m and mS26. These conformational changes signal completion of 5'-end rRNA processing through protection of the mature 5'-end of the 15S rRNA and stabilization of mS47. The removal of the 5' precursor together with the dissociation of Ccm1 may be catalyzed by the 5'-3' exoribonuclease Pet127. Involved in the specific removal of group I introns in mitochondrial encoded transcripts. This chain is Mitochondrial 15S rRNA processing factor CCM1 (CCM1), found in Zygosaccharomyces rouxii (strain ATCC 2623 / CBS 732 / NBRC 1130 / NCYC 568 / NRRL Y-229).